Reading from the N-terminus, the 579-residue chain is Arginine--tRNA ligase (579 aa).

Positions 123–133 match the 'HIGH' region motif; the sequence is ANPTGPVHVGR.

This sequence belongs to the class-I aminoacyl-tRNA synthetase family.

Its subcellular location is the cytoplasm. The enzyme catalyses tRNA(Arg) + L-arginine + ATP = L-arginyl-tRNA(Arg) + AMP + diphosphate. This is Arginine--tRNA ligase from Haloarcula marismortui (strain ATCC 43049 / DSM 3752 / JCM 8966 / VKM B-1809) (Halobacterium marismortui).